The chain runs to 180 residues: Homeobox protein ceh-12 (180 aa).

The tract at residues 15–37 (SSQNEDQKLESHPSPPSQIPNYS) is disordered. Positions 110–169 (MRRPRTAFSSEQLVQLEKQFSDNRYLSRPRRYQLAQQLSLSETQIKIWFQNRRMKNKRCP) form a DNA-binding region, homeobox.

In terms of tissue distribution, expressed in VB motor neurons in the ventral nerve cord.

Its subcellular location is the nucleus. In terms of biological role, transcription factor. Plays a role, downstream from homeobox protein unc-4 and Wnt signaling, in specifying synaptic inputs to A-class motor neurons. Involved in patterning of the synaptic outputs of the postmitotic DA class cholinergic motor neurons. This chain is Homeobox protein ceh-12 (ceh-12), found in Caenorhabditis elegans.